A 366-amino-acid chain; its full sequence is Methyltransferase calH (366 aa).

S-adenosyl-L-methionine is bound by residues T189, D216, and 245–246; that span reads NA.

Belongs to the class I-like SAM-binding methyltransferase superfamily.

It functions in the pathway secondary metabolite biosynthesis. Functionally, methyltransferase; part of the gene cluster that mediates the biosynthesis of calbistrin A and related compounds. Calbistrin A is a secondary metabolite with an interesting structure that was recently found to have bioactivity against leukemia cells. It consists of two polyketides linked by an ester bond: a bicyclic decalin containing polyketide and a linear 12 carbon dioic acid structure. The polyketide synthase calA is probably responsible for forming the decalin moiety. Because calA lacks a designated enoylreductase (ER) domain, the required activity is provided by the trans-enoyl reductase calK. Following release from the PKS, calF then probably catalyzes the oxidation and the subsequent Diels Alder cycloisomerization that lead to the formation of the decalin moiety. The decalin polyketide backbone includes two C-methyl groups, at C7 and C11 in backbone, of which the C7 position is probably methylated by the methyltransferase domain of calA. A candidate for adding the methyl group at C11, if not done by CalA, is the cluster methyltransferase calH. Several additional tailoring enzymes within the cluster could be involved in the modification of the decalin polyketide product. Those include the 3 cytochrome P450 monooxygenases CalE, CalG and CalL, of which one might be responsible for the introduction of the extra hydroxyl group attached to the backbone of the decalin moiety, at position C9 in the backbone, that allows for attachment of the linear moiety. One tailoring enzyme activity that is expected to be involved in biosynthesis of calbistrin is an acyltransferase for connecting the two polyketide synthase products, and which could be performed by the cluster acyltransferase calJ. The enzyme responsible for the biosynthesis of the linear moiety, probably a second PKS, has not been identified yet. The sequence is that of Methyltransferase calH from Penicillium decumbens.